Consider the following 550-residue polypeptide: Arginine--tRNA ligase (550 aa).

The short motif at 130–140 (ANPTGPIHIGG) is the 'HIGH' region element.

It belongs to the class-I aminoacyl-tRNA synthetase family. Monomer.

The protein localises to the cytoplasm. It catalyses the reaction tRNA(Arg) + L-arginine + ATP = L-arginyl-tRNA(Arg) + AMP + diphosphate. The chain is Arginine--tRNA ligase from Mycobacterium marinum (strain ATCC BAA-535 / M).